A 492-amino-acid chain; its full sequence is DEAD-box ATP-dependent RNA helicase RhpA (492 aa).

The Q motif signature appears at 20-48 (PSFNDLGLKESVLKSVYEAGFTSPSPIQE). One can recognise a Helicase ATP-binding domain in the interval 51–220 (IPAVLQGRDV…DKILENPIKI (170 aa)). 64–71 (AQTGTGKT) contributes to the ATP binding site. Residues 168–171 (DESD) carry the DEAD box motif. Residues 231 to 393 (DITQRFYVIN…EIPTINENQI (163 aa)) enclose the Helicase C-terminal domain. The interval 445 to 492 (AIQNPKEKTPKPSNKKTPQHERARSFKKGQHRDRHPKTNHYSKKPKRR) is disordered. A compositionally biased stretch (basic residues) spans 469-492 (SFKKGQHRDRHPKTNHYSKKPKRR).

The protein belongs to the DEAD box helicase family. Homodimer. Interacts with RNase J (rnj), might be a member of a minimal RNA degradosome complex.

The protein resides in the cytoplasm. It catalyses the reaction ATP + H2O = ADP + phosphate + H(+). In terms of biological role, DEAD-box RNA helicase probably involved in RNA degradation. Unwinds dsRNA in both 5'- and 3'-directions. This is DEAD-box ATP-dependent RNA helicase RhpA (rhpA) from Helicobacter pylori (strain ATCC 700392 / 26695) (Campylobacter pylori).